Here is a 35-residue protein sequence, read N- to C-terminus: Photosystem II reaction center protein T (35 aa).

A helical membrane pass occupies residues 3–23 (ALVYTFLLVSTLGIIFFAIFF).

This sequence belongs to the PsbT family. PSII is composed of 1 copy each of membrane proteins PsbA, PsbB, PsbC, PsbD, PsbE, PsbF, PsbH, PsbI, PsbJ, PsbK, PsbL, PsbM, PsbT, PsbY, PsbZ, Psb30/Ycf12, at least 3 peripheral proteins of the oxygen-evolving complex and a large number of cofactors. It forms dimeric complexes.

The protein localises to the plastid. It localises to the chloroplast thylakoid membrane. In terms of biological role, found at the monomer-monomer interface of the photosystem II (PS II) dimer, plays a role in assembly and dimerization of PSII. PSII is a light-driven water plastoquinone oxidoreductase, using light energy to abstract electrons from H(2)O, generating a proton gradient subsequently used for ATP formation. This is Photosystem II reaction center protein T from Taxus brevifolia (Pacific yew).